Reading from the N-terminus, the 850-residue chain is Protein translocase subunit SecA 2 (850 aa).

ATP contacts are provided by residues Gln83, 101 to 105, and Asp491; that span reads GEGKT.

The protein belongs to the SecA family. Monomer and homodimer. Part of the essential Sec protein translocation apparatus which comprises SecA, SecYEG and auxiliary proteins SecDF. Other proteins may also be involved.

It is found in the cell membrane. The protein localises to the cytoplasm. The enzyme catalyses ATP + H2O + cellular proteinSide 1 = ADP + phosphate + cellular proteinSide 2.. In terms of biological role, part of the Sec protein translocase complex. Interacts with the SecYEG preprotein conducting channel. Has a central role in coupling the hydrolysis of ATP to the transfer of proteins into and across the cell membrane, serving as an ATP-driven molecular motor driving the stepwise translocation of polypeptide chains across the membrane. The sequence is that of Protein translocase subunit SecA 2 from Mycolicibacterium vanbaalenii (strain DSM 7251 / JCM 13017 / BCRC 16820 / KCTC 9966 / NRRL B-24157 / PYR-1) (Mycobacterium vanbaalenii).